A 149-amino-acid chain; its full sequence is Calmodulin (149 aa).

Ala-2 carries the post-translational modification N-acetylalanine. 4 consecutive EF-hand domains span residues 8 to 43, 44 to 79, 81 to 116, and 117 to 149; these read EQIA…LGQN, PTEA…KMKD, DSEE…LGEK, and LTDE…MMAK. 14 residues coordinate Ca(2+): Asp-21, Asp-23, Asp-25, Thr-27, Glu-32, Asp-57, Asp-59, Asn-61, Thr-63, Glu-68, Asp-94, Asp-96, Asn-98, and Glu-105. Position 116 is an N6,N6,N6-trimethyllysine (Lys-116). Residues Asp-130, Asp-132, Asp-134, Gln-136, and Glu-141 each coordinate Ca(2+).

This sequence belongs to the calmodulin family.

Calmodulin mediates the control of a large number of enzymes, ion channels and other proteins by Ca(2+). Among the enzymes to be stimulated by the calmodulin-Ca(2+) complex are a number of protein kinases and phosphatases. This is Calmodulin from Macrocystis pyrifera (Giant kelp).